The chain runs to 154 residues: uncharacterized protein (154 aa).

It is found in the mitochondrion. This is an uncharacterized protein from Arabidopsis thaliana (Mouse-ear cress).